A 415-amino-acid chain; its full sequence is Gamma-glutamyl phosphate reductase (415 aa).

Belongs to the gamma-glutamyl phosphate reductase family.

The protein resides in the cytoplasm. The catalysed reaction is L-glutamate 5-semialdehyde + phosphate + NADP(+) = L-glutamyl 5-phosphate + NADPH + H(+). It functions in the pathway amino-acid biosynthesis; L-proline biosynthesis; L-glutamate 5-semialdehyde from L-glutamate: step 2/2. In terms of biological role, catalyzes the NADPH-dependent reduction of L-glutamate 5-phosphate into L-glutamate 5-semialdehyde and phosphate. The product spontaneously undergoes cyclization to form 1-pyrroline-5-carboxylate. The sequence is that of Gamma-glutamyl phosphate reductase from Listeria innocua serovar 6a (strain ATCC BAA-680 / CLIP 11262).